The primary structure comprises 671 residues: MGRLLLWVGLVLLMKPNDGTAYKLVCYFTNWAHSRPVPASILPRDLDPFLCTHLIFAFASMSNNQIVANNLQDEKILYPEFNKLKERNRALKTLLSVGGWNFGTSRFTTMLSTLASREKFIGSVVSFLRTHGFDGLDLFFLYPGLRGSPINDRWNFLFLIEELQFAFEKEALLTQRPRLLLSAAVSGIPYIIQTSYDVHLLGRRLDFINVLSYDLHGSWEKSTGHNSPLFSLPEDPKSSAFAMNYWRNLGAPADKLLMGFPAYGRTFHLLRESKNGLQAASMGPASPGKYTKQAGFLAYYEVCSFIQRAEKHWIDHQYVPYAYKGKEWVGYDDAVSFSYKAMFVKKEHFGGAMVWTLDMDDVRGTFCGNGPFPLVHILNELLVRAEFNSTPLPQFWFTLPVNSSGPGSESLPVTEELTTDTVKILPPGGEAMATEVHRKYEKVTTIPNGGFVTPAGTTSPTTHAVALERNAMAPGAKTTTSLDLLSETMTGMTVTVQTQTAGRETMTTVGNQSVTPGGETMTTVGNQSVTPGGETVTTVGNQSVTPGGETMTTVGNQSVTPGGETVTIVGNKSVTPVGETVTIVGNKSVTPGGQTTATVGSQSVTPPGMDTTLVYLQTMTLSEKGTSSKKAVVLEKVTVPPREISVMPNEQNTALNRENLIAEVESYSQDG.

The N-terminal stretch at Met1–Ala21 is a signal peptide. One can recognise a GH18 domain in the interval Tyr22–Ala385. The cysteines at positions 26 and 51 are disulfide-linked. Chitin contacts are provided by residues Leu71–Gln72, Gly98–Asn101, Tyr142, Leu211–Asp214, and Trp355. A glycan (N-linked (GlcNAc...) asparagine) is linked at Asn402. A run of 8 repeats spans residues Thr490–Glu504, Thr505–Glu519, Thr520–Glu534, Thr535–Glu549, Thr550–Glu564, Thr565–Glu579, Thr580–Gln594, and Thr595–Met609. The 8 X 15 AA tandem repeats stretch occupies residues Thr490–Met609. 6 N-linked (GlcNAc...) asparagine glycosylation sites follow: Asn511, Asn526, Asn541, Asn556, Asn571, and Asn586.

It belongs to the glycosyl hydrolase 18 family. In terms of processing, highly O-glycosylated and also N-glycosylated. Oviduct.

It is found in the cytoplasmic vesicle. It localises to the secretory vesicle. In terms of biological role, binds to oocyte zona pellucida in vivo. May play a role in the fertilization process and/or early embryonic development. Might act as a protective secretion influencing the first steps of the reproductive process necessary for the normal triggering of fertilization and early embryonic development. In Mesocricetus auratus (Golden hamster), this protein is Oviduct-specific glycoprotein (OVGP1).